We begin with the raw amino-acid sequence, 260 residues long: Thiazole synthase (260 aa).

The active-site Schiff-base intermediate with DXP is Lys96. Residues Gly157, 184–185 (AG), and 206–207 (NT) contribute to the 1-deoxy-D-xylulose 5-phosphate site.

The protein belongs to the ThiG family. Homotetramer. Forms heterodimers with either ThiH or ThiS.

The protein resides in the cytoplasm. It catalyses the reaction [ThiS sulfur-carrier protein]-C-terminal-Gly-aminoethanethioate + 2-iminoacetate + 1-deoxy-D-xylulose 5-phosphate = [ThiS sulfur-carrier protein]-C-terminal Gly-Gly + 2-[(2R,5Z)-2-carboxy-4-methylthiazol-5(2H)-ylidene]ethyl phosphate + 2 H2O + H(+). Its pathway is cofactor biosynthesis; thiamine diphosphate biosynthesis. In terms of biological role, catalyzes the rearrangement of 1-deoxy-D-xylulose 5-phosphate (DXP) to produce the thiazole phosphate moiety of thiamine. Sulfur is provided by the thiocarboxylate moiety of the carrier protein ThiS. In vitro, sulfur can be provided by H(2)S. In Nitrobacter winogradskyi (strain ATCC 25391 / DSM 10237 / CIP 104748 / NCIMB 11846 / Nb-255), this protein is Thiazole synthase.